A 226-amino-acid polypeptide reads, in one-letter code: Biosynthetic peptidoglycan transglycosylase (226 aa).

Residues 7-29 (VMALSAIGLLLLPYLLTPLYRIG) form a helical membrane-spanning segment.

It belongs to the glycosyltransferase 51 family.

It localises to the cell inner membrane. The enzyme catalyses [GlcNAc-(1-&gt;4)-Mur2Ac(oyl-L-Ala-gamma-D-Glu-L-Lys-D-Ala-D-Ala)](n)-di-trans,octa-cis-undecaprenyl diphosphate + beta-D-GlcNAc-(1-&gt;4)-Mur2Ac(oyl-L-Ala-gamma-D-Glu-L-Lys-D-Ala-D-Ala)-di-trans,octa-cis-undecaprenyl diphosphate = [GlcNAc-(1-&gt;4)-Mur2Ac(oyl-L-Ala-gamma-D-Glu-L-Lys-D-Ala-D-Ala)](n+1)-di-trans,octa-cis-undecaprenyl diphosphate + di-trans,octa-cis-undecaprenyl diphosphate + H(+). The protein operates within cell wall biogenesis; peptidoglycan biosynthesis. Peptidoglycan polymerase that catalyzes glycan chain elongation from lipid-linked precursors. This Nitrobacter winogradskyi (strain ATCC 25391 / DSM 10237 / CIP 104748 / NCIMB 11846 / Nb-255) protein is Biosynthetic peptidoglycan transglycosylase.